Reading from the N-terminus, the 303-residue chain is Uricase (303 aa).

N-acetylalanine is present on A2. N6-acetyllysine; alternate is present on residues K10 and K23. N6-succinyllysine; alternate occurs at positions 10 and 23. The active-site Charge relay system is K23. N6-acetyllysine is present on residues K27 and K36. Residues S39 and S63 each carry the phosphoserine modification. The active-site Charge relay system is the T68. Residues T68 and D69 each contribute to the urate site. N6-acetyllysine is present on residues K118, K122, and K164. Residue F170 participates in urate binding. Residues K175 and K185 each carry the N6-acetyllysine modification. R187 provides a ligand contact to urate. K220 bears the N6-acetyllysine; alternate mark. K220 carries the N6-succinyllysine; alternate modification. A Phosphoserine modification is found at S231. Positions 234, 235, and 261 each coordinate urate. H263 functions as the Charge relay system in the catalytic mechanism. At K277 the chain carries N6-acetyllysine. Y288 carries the post-translational modification Phosphotyrosine. Positions 301-303 (SRL) match the Microbody targeting signal motif.

This sequence belongs to the uricase family. As to expression, expressed in liver. Not detected in other tissues tested.

The protein localises to the peroxisome. The enzyme catalyses urate + O2 + H2O = 5-hydroxyisourate + H2O2. The protein operates within purine metabolism; urate degradation; (S)-allantoin from urate: step 1/3. Competitively inhibited by xanthine. In terms of biological role, catalyzes the oxidation of uric acid to 5-hydroxyisourate, which is further processed to form (S)-allantoin. This Rattus norvegicus (Rat) protein is Uricase (Uox).